A 1406-amino-acid chain; its full sequence is DNA-directed RNA polymerase subunit beta' (1406 aa).

The Zn(2+) site is built by Cys-72, Cys-74, Cys-87, and Cys-90. Mg(2+) contacts are provided by Asp-462, Asp-464, and Asp-466. Zn(2+) contacts are provided by Cys-816, Cys-889, Cys-896, and Cys-899.

Belongs to the RNA polymerase beta' chain family. The RNAP catalytic core consists of 2 alpha, 1 beta, 1 beta' and 1 omega subunit. When a sigma factor is associated with the core the holoenzyme is formed, which can initiate transcription. The cofactor is Mg(2+). Requires Zn(2+) as cofactor.

It catalyses the reaction RNA(n) + a ribonucleoside 5'-triphosphate = RNA(n+1) + diphosphate. Functionally, DNA-dependent RNA polymerase catalyzes the transcription of DNA into RNA using the four ribonucleoside triphosphates as substrates. In Psychrobacter sp. (strain PRwf-1), this protein is DNA-directed RNA polymerase subunit beta'.